Reading from the N-terminus, the 297-residue chain is Phosphatidylinositol N-acetylglucosaminyltransferase subunit C (297 aa).

4 helical membrane-spanning segments follow: residues 67 to 87 (VFVV…WLFG), 88 to 108 (TGLA…GGDG), 153 to 173 (SVFM…AAIV), and 239 to 259 (AFGG…LLLF).

This sequence belongs to the PIGC family. As to quaternary structure, component of the glycosylphosphatidylinositol-N-acetylglucosaminyltransferase (GPI-GnT) complex composed at least by PIGA, PIGC, PIGH, PIGP, PIGQ, PIGY and DPM2. Interacts with PIGQ. Interacts with the heterodimer PIGA:PIGH.

It localises to the endoplasmic reticulum membrane. Its pathway is glycolipid biosynthesis; glycosylphosphatidylinositol-anchor biosynthesis. Functionally, part of the glycosylphosphatidylinositol-N-acetylglucosaminyltransferase (GPI-GnT) complex that catalyzes the transfer of N-acetylglucosamine from UDP-N-acetylglucosamine to phosphatidylinositol and participates in the first step of GPI biosynthesis. This is Phosphatidylinositol N-acetylglucosaminyltransferase subunit C from Rattus norvegicus (Rat).